A 934-amino-acid chain; its full sequence is Complement component C6 (934 aa).

Positions 1–21 (MTRHLTLCFILLIILIDKSEA) are cleaved as a signal peptide. Cystine bridges form between cysteine 22–cysteine 61, cysteine 24–cysteine 65, cysteine 35–cysteine 73, cysteine 39–cysteine 78, cysteine 82–cysteine 117, cysteine 93–cysteine 127, cysteine 96–cysteine 133, cysteine 140–cysteine 151, cysteine 146–cysteine 164, cysteine 158–cysteine 173, and cysteine 180–cysteine 218. TSP type-1 domains follow at residues 22-79 (CFCD…ETCP) and 81-134 (NCVL…ELCK). Tryptophan 29 and tryptophan 32 each carry a C-linked (Man) tryptophan glycan. Serine 38 carries an O-linked (Fuc...) serine glycan. The C-linked (Man) tryptophan glycan is linked to tryptophan 90. The 38-residue stretch at 138-175 (TDCKNKFLCDSGRCIPSKLKCNGENDCGDNSDERNCGR) folds into the LDL-receptor class A domain. Residues leucine 156, asparagine 159, glutamate 161, aspartate 163, aspartate 169, and glutamate 170 each contribute to the Ca(2+) site. The region spanning 176–522 (TKPVCSRTYT…EYAAKFDPCQ (347 aa)) is the MACPF domain. The chain crosses the membrane as a beta stranded span at residues 278-290 (SFYVPIFYSSKKS). The N-linked (GlcNAc...) asparagine glycan is linked to asparagine 324. Residue threonine 392 is glycosylated (O-linked (Fuc...) threonine). 21 disulfide bridges follow: cysteine 399–cysteine 420, cysteine 499–cysteine 623, cysteine 521–cysteine 570, cysteine 523–cysteine 539, cysteine 526–cysteine 541, cysteine 543–cysteine 552, cysteine 577–cysteine 611, cysteine 589–cysteine 601, cysteine 644–cysteine 686, cysteine 672–cysteine 699, cysteine 704–cysteine 746, cysteine 732–cysteine 761, cysteine 773–cysteine 823, cysteine 784–cysteine 801, cysteine 786–cysteine 837, cysteine 793–cysteine 816, cysteine 862–cysteine 873, cysteine 867–cysteine 919, cysteine 880–cysteine 897, cysteine 882–cysteine 932, and cysteine 888–cysteine 912. The beta stranded transmembrane segment at 402–415 (YETKKRFLFFTKTY) threads the bilayer. Residues 523 to 553 (CAPCPNNGRPRLSGTECLCVCQSGTYGENCE) form the EGF-like domain. Residues 565-612 (DGNWGCWSSWSACNAAYRRSRSRECNNPEPQRGGQRCEGKHWQEEDCT) form the TSP type-1 3 domain. C-linked (Man) tryptophan glycosylation is found at tryptophan 568, tryptophan 571, and tryptophan 574. CCP stretches follow at residues 611 to 688 (CTFS…RCLP) and 689 to 765 (DRTW…EKDI). Sushi domains are found at residues 642–701 (SGCP…ECQR) and 702–763 (TECL…SCEK). The interval 642–934 (SGCPQPPLPE…EILNPGRCLD (293 aa)) is C5B-binding domain. Factor I module (FIM) stretches follow at residues 766-840 (LTKS…CQEG) and 858-934 (KRVP…RCLD). One can recognise a Kazal-like 1 domain in the interval 780 to 839 (SGSECVCMSPEEDCSSYSEDLCIFDEGSSQYFTSSACKFLAEKCLNSNQFHFVHAGSCQE). Residues 876 to 934 (HTSNCVCLLPPQCPKDENQLHCVKMGSSMRGKTVNICTLGAVRCANRKVEILNPGRCLD) form the Kazal-like 2 domain.

Belongs to the complement C6/C7/C8/C9 family. As to quaternary structure, component of the membrane attack complex (MAC), composed of complement C5b, C6, C7, C8A, C8B, C8G and multiple copies of the pore-forming subunit C9. In terms of processing, all cysteine residues are assumed to be cross-linked to one another. Individual modules containing an even number of conserved cysteine residues are supposed to have disulfide linkages only within the same module.

The protein localises to the secreted. Its subcellular location is the target cell membrane. With respect to regulation, membrane attack complex (MAC) assembly is inhibited by CD59, thereby protecting self-cells from damage during complement activation. MAC assembly is also inhibited by clusterin (CLU) chaperones that inhibit polymerization of C9. In terms of biological role, component of the membrane attack complex (MAC), a multiprotein complex activated by the complement cascade, which inserts into a target cell membrane and forms a pore, leading to target cell membrane rupture and cell lysis. The MAC is initiated by proteolytic cleavage of C5 into complement C5b in response to the classical, alternative, lectin and GZMK complement pathways. The complement pathways consist in a cascade of proteins that leads to phagocytosis and breakdown of pathogens and signaling that strengthens the adaptive immune system. Together with component C5b, involved in MAC complex assembly: complement C5b and C6 associate with the outer leaflet of target cell membrane, reducing the energy for membrane bending. The chain is Complement component C6 (C6) from Rattus norvegicus (Rat).